We begin with the raw amino-acid sequence, 1142 residues long: DNA-directed RNA polymerase subunit beta N-terminal section (1142 aa).

This sequence belongs to the RNA polymerase beta chain family. In terms of assembly, in plastids the minimal PEP RNA polymerase catalytic core is composed of four subunits: alpha, beta, beta', and beta''. When a (nuclear-encoded) sigma factor is associated with the core the holoenzyme is formed, which can initiate transcription.

The protein localises to the plastid. It is found in the chloroplast. The enzyme catalyses RNA(n) + a ribonucleoside 5'-triphosphate = RNA(n+1) + diphosphate. DNA-dependent RNA polymerase catalyzes the transcription of DNA into RNA using the four ribonucleoside triphosphates as substrates. In Pleurastrum terricola (Filamentous green alga), this protein is DNA-directed RNA polymerase subunit beta N-terminal section (rpoB1).